The sequence spans 520 residues: 2-isopropylmalate synthase (520 aa).

The 263-residue stretch at 12–274 folds into the Pyruvate carboxyltransferase domain; the sequence is VVIFDTTLRD…WCNVESTMLT (263 aa). Residues Asp21, His209, His211, and Asn245 each contribute to the Mn(2+) site. The tract at residues 398-520 is regulatory domain; that stretch reads KLTSLTVIAG…RDVPSAAAAS (123 aa).

It belongs to the alpha-IPM synthase/homocitrate synthase family. LeuA type 1 subfamily. As to quaternary structure, homodimer. Mn(2+) serves as cofactor.

It is found in the cytoplasm. It carries out the reaction 3-methyl-2-oxobutanoate + acetyl-CoA + H2O = (2S)-2-isopropylmalate + CoA + H(+). Its pathway is amino-acid biosynthesis; L-leucine biosynthesis; L-leucine from 3-methyl-2-oxobutanoate: step 1/4. In terms of biological role, catalyzes the condensation of the acetyl group of acetyl-CoA with 3-methyl-2-oxobutanoate (2-ketoisovalerate) to form 3-carboxy-3-hydroxy-4-methylpentanoate (2-isopropylmalate). The chain is 2-isopropylmalate synthase from Nitrobacter hamburgensis (strain DSM 10229 / NCIMB 13809 / X14).